The chain runs to 144 residues: 3-hydroxyacyl-[acyl-carrier-protein] dehydratase FabZ (144 aa).

Residue histidine 47 is part of the active site.

The protein belongs to the thioester dehydratase family. FabZ subfamily.

The protein resides in the cytoplasm. The catalysed reaction is a (3R)-hydroxyacyl-[ACP] = a (2E)-enoyl-[ACP] + H2O. Functionally, involved in unsaturated fatty acids biosynthesis. Catalyzes the dehydration of short chain beta-hydroxyacyl-ACPs and long chain saturated and unsaturated beta-hydroxyacyl-ACPs. This chain is 3-hydroxyacyl-[acyl-carrier-protein] dehydratase FabZ, found in Alcanivorax borkumensis (strain ATCC 700651 / DSM 11573 / NCIMB 13689 / SK2).